A 98-amino-acid polypeptide reads, in one-letter code: NADH-ubiquinone oxidoreductase chain 4L (98 aa).

The next 3 helical transmembrane spans lie at 1-21, 29-49, and 61-81; these read MSLV…GLLM, SLLC…IMIL, and IILL…LVMV.

It belongs to the complex I subunit 4L family. Core subunit of respiratory chain NADH dehydrogenase (Complex I) which is composed of 45 different subunits.

The protein localises to the mitochondrion inner membrane. It carries out the reaction a ubiquinone + NADH + 5 H(+)(in) = a ubiquinol + NAD(+) + 4 H(+)(out). In terms of biological role, core subunit of the mitochondrial membrane respiratory chain NADH dehydrogenase (Complex I) which catalyzes electron transfer from NADH through the respiratory chain, using ubiquinone as an electron acceptor. Part of the enzyme membrane arm which is embedded in the lipid bilayer and involved in proton translocation. This chain is NADH-ubiquinone oxidoreductase chain 4L (MT-ND4L), found in Sorex unguiculatus (Long-clawed shrew).